The sequence spans 217 residues: tRNA (guanine-N(7)-)-methyltransferase (217 aa).

Residues E44, E69, D96, and D118 each contribute to the S-adenosyl-L-methionine site. Residue D118 is part of the active site. Residues K122, D154, and 191–194 (TEYE) each bind substrate.

This sequence belongs to the class I-like SAM-binding methyltransferase superfamily. TrmB family.

The catalysed reaction is guanosine(46) in tRNA + S-adenosyl-L-methionine = N(7)-methylguanosine(46) in tRNA + S-adenosyl-L-homocysteine. The protein operates within tRNA modification; N(7)-methylguanine-tRNA biosynthesis. Catalyzes the formation of N(7)-methylguanine at position 46 (m7G46) in tRNA. The protein is tRNA (guanine-N(7)-)-methyltransferase of Bacillus anthracis (strain CDC 684 / NRRL 3495).